The following is a 596-amino-acid chain: MHRYRSHTCAALRKTDVGSTVRISGWVHRVRDHGGVLFIDLRDHYGITQVVADPDSPAFKMAETVRGEWVIRIDGLVKARTEDTVNKAMATGEIELYAQEIEVLSAAKELPLPVFGEPDYPEDVRLKYRFLDLRRETLHKNIVKRTQVISAMRREMGNVGFTEYTTPILTASSPEGARDFLVPSRIHPGTFYALPQAPQQYKQLLMVAGFDRYFQIAPCFRDEDPRADRLPGEFYQLDLEMSFVTQEDVWDTMGPLMTSVFEEFAEGKPVTKEWPRIPYDEAIRKYGSDKPDLRNPIVMEAVTEHFAGSGFKVFAGMIASNPKVQIWAIPAKTGGSRAFCDRMNAWAQSQGQPGLGYIFWRSENDKLEGAGPLAKNIGEERTDAIRTQLGLGDGDACFFVAGEPEKFYKFAGEARTKAGEELNLVDRDRFELCWIVDFPFFEWSEEDKKVDFAHNPFSMPQGGLDALQNQDPLTIKAFQYDAVCNGFEIASGSIRNQSPETMVAAFEKVGLSQQDVEDRFGGLYRAFQYGAPPHGGAAFGIDRIVMLLVGAKNLREISVFPMNQQAQDLLMGAPSPATPTQLRELSIRPIPPVKKD.

Glu-175 is an L-aspartate binding site. Residues 199 to 202 (QQYK) are aspartate. L-aspartate-binding residues include Arg-221 and His-454. 221–223 (RDE) is a binding site for ATP. Glu-488 provides a ligand contact to ATP. Arg-495 lines the L-aspartate pocket. Position 540–543 (540–543 (GIDR)) interacts with ATP.

The protein belongs to the class-II aminoacyl-tRNA synthetase family. Type 1 subfamily. As to quaternary structure, homodimer.

It is found in the cytoplasm. It carries out the reaction tRNA(Asx) + L-aspartate + ATP = L-aspartyl-tRNA(Asx) + AMP + diphosphate. In terms of biological role, aspartyl-tRNA synthetase with relaxed tRNA specificity since it is able to aspartylate not only its cognate tRNA(Asp) but also tRNA(Asn). Reaction proceeds in two steps: L-aspartate is first activated by ATP to form Asp-AMP and then transferred to the acceptor end of tRNA(Asp/Asn). This Rhizobium leguminosarum bv. trifolii (strain WSM2304) protein is Aspartate--tRNA(Asp/Asn) ligase.